We begin with the raw amino-acid sequence, 452 residues long: Exodeoxyribonuclease 7 large subunit (452 aa).

It belongs to the XseA family. As to quaternary structure, heterooligomer composed of large and small subunits.

Its subcellular location is the cytoplasm. It catalyses the reaction Exonucleolytic cleavage in either 5'- to 3'- or 3'- to 5'-direction to yield nucleoside 5'-phosphates.. Its function is as follows. Bidirectionally degrades single-stranded DNA into large acid-insoluble oligonucleotides, which are then degraded further into small acid-soluble oligonucleotides. In Bacillus cereus (strain 03BB102), this protein is Exodeoxyribonuclease 7 large subunit.